We begin with the raw amino-acid sequence, 265 residues long: Proline-rich protein 23B (265 aa).

Residues 1 to 18 are compositionally biased toward low complexity; sequence MVSRPRSPSAFPAPWWGQ. 2 disordered regions span residues 1–49 and 226–265; these read MVSR…EDPA and PSSP…LFQA. Residues 226–237 show a composition bias toward pro residues; it reads PSSPLQPLPPSP. Basic residues predominate over residues 256 to 265; that stretch reads CKARRRLFQA.

This sequence belongs to the PRR23 family.

The protein is Proline-rich protein 23B (PRR23B) of Homo sapiens (Human).